A 923-amino-acid polypeptide reads, in one-letter code: MDGAHENAAESSSSVPRSEEPACSAGGPEVLPPEESEGCAGSLDAAPKKLCGYLSKFGGKGPIRGWKSRWFFYDERKCHLYYSRTAQDANPLDSIDLSSAVFDCKADAEEGTFEIKTPSRIITLKAATKQVMLYWLQQLQTKRWEFHSSPPAPPAAPDAAPAGNGPTLRLELEQEEEELEDFLSPVRTPPGLVGAAAALQPVPTKPLALQNISLKHLGTEIQNTMYNIRSNRQAQGTGHGPPGEDPPLSAEPQRAEWPLPSDPGTPGKDPADSPKPTPKSSLTANLIQKAKRPNNTFPLFAEGLTRTRTAQEKILALEQQVLMLTKELKSQKELVRILHKALEAAQQEKRASSAYLAAAEDKDRLELVRHKVRQIAELGKRVEALERERESLAQTAGLREQQVQELQRHVQQLLEKNQAKQQVICKLSEKVTWDFTHPPTQPPVPLGAADRDFLSQQEKMEHLKDDMEAYRTQNRFLNSEIHQVTKIWRRVAEKEKALLMKCAYLQAKNCQVESKYLAGLRRLQEAAGGEATESSELLRQLTQEALQWEAGEASADGVELSPISEYDEYGFLTVPNYEMEDLKLLAKIQALEVHSHHLLAHEAVERPLRERWAALGDLAPSVELKQLLRAGVPREHRPRVWKWLVQLRVRHLQSPGHYQELLSRGQVREHPAARQIELDLNRTFPNNKHFTCPTSTFPDKLRRVLLAFSWQNPTIGYCQGLNRLAAIALLVLEEEESAFWCLVAIVETIMPADYYSKTLTSSQVDQRVLQDLLLEKLPRLMAHLGQYRVDLSFLTFNWFLVVFADSLISNILLRVWDAFLYEGTKYNEEEILRLQDSLEIYQYLRFFTKTICNSQKLMTIAFNDMNPFPMKQLRQLRRAHRERLEAELHELEQLKAEYLETQSSRGPAVPDGCTSEDEGEGEA.

Position 1 is an N-acetylmethionine (M1). The interval 1–39 (MDGAHENAAESSSSVPRSEEPACSAGGPEVLPPEESEGC) is disordered. Residues 1 to 171 (MDGAHENAAE…AGNGPTLRLE (171 aa)) form an interaction with CADH1 region. A PH domain is found at 47–144 (PKKLCGYLSK…WLQQLQTKRW (98 aa)). Disordered stretches follow at residues 146–166 (FHSSPPAPPAAPDAAPAGNGP) and 232–289 (RQAQ…LIQK). The tract at residues 301 to 439 (AEGLTRTRTA…KVTWDFTHPP (139 aa)) is interaction with RAC1. Residues 308 to 486 (RTAQEKILAL…LNSEIHQVTK (179 aa)) are a coiled coil. In terms of domain architecture, Rab-GAP TBC spans 631–823 (GVPREHRPRV…RVWDAFLYEG (193 aa)). A coiled-coil region spans residues 870–904 (MKQLRQLRRAHRERLEAELHELEQLKAEYLETQSS). The disordered stretch occupies residues 900 to 923 (ETQSSRGPAVPDGCTSEDEGEGEA). The span at 914–923 (TSEDEGEGEA) shows a compositional bias: acidic residues. S915 carries the post-translational modification Phosphoserine.

In terms of assembly, interacts with activated RAC1 and CDH1.

The protein localises to the cytoplasm. It is found in the cytoplasmic vesicle. It localises to the cell junction. Acts as a GTPase-activating protein for RAB7A. Signal effector acting as a linker between RAC1 and RAB7A, leading to RAB7A inactivation and subsequent inhibition of cadherin degradation and reduced cell-cell adhesion. This is TBC1 domain family member 2A (TBC1D2) from Ailuropoda melanoleuca (Giant panda).